Here is a 492-residue protein sequence, read N- to C-terminus: Ribose import ATP-binding protein RbsA (492 aa).

ABC transporter domains are found at residues 3–239 and 238–492; these read IDMR…VGRK and RKLE…TGGK. 35-42 provides a ligand contact to ATP; sequence GENGAGKS.

It belongs to the ABC transporter superfamily. Ribose importer (TC 3.A.1.2.1) family. The complex is composed of an ATP-binding protein (RbsA), two transmembrane proteins (RbsC) and a solute-binding protein (RbsB).

It is found in the cell membrane. The enzyme catalyses D-ribose(out) + ATP + H2O = D-ribose(in) + ADP + phosphate + H(+). Part of the ABC transporter complex RbsABC involved in ribose import. Responsible for energy coupling to the transport system. This is Ribose import ATP-binding protein RbsA from Streptococcus agalactiae serotype Ia (strain ATCC 27591 / A909 / CDC SS700).